A 304-amino-acid polypeptide reads, in one-letter code: Probable 5-dehydro-4-deoxyglucarate dehydratase (304 aa).

This sequence belongs to the DapA family.

It catalyses the reaction 5-dehydro-4-deoxy-D-glucarate + H(+) = 2,5-dioxopentanoate + CO2 + H2O. Its pathway is carbohydrate acid metabolism; D-glucarate degradation; 2,5-dioxopentanoate from D-glucarate: step 2/2. In Pseudarthrobacter chlorophenolicus (strain ATCC 700700 / DSM 12829 / CIP 107037 / JCM 12360 / KCTC 9906 / NCIMB 13794 / A6) (Arthrobacter chlorophenolicus), this protein is Probable 5-dehydro-4-deoxyglucarate dehydratase.